Reading from the N-terminus, the 450-residue chain is Asparagine--tRNA ligase (450 aa).

This sequence belongs to the class-II aminoacyl-tRNA synthetase family. In terms of assembly, homodimer.

It localises to the cytoplasm. The enzyme catalyses tRNA(Asn) + L-asparagine + ATP = L-asparaginyl-tRNA(Asn) + AMP + diphosphate + H(+). This is Asparagine--tRNA ligase from Enterococcus faecalis (strain ATCC 700802 / V583).